We begin with the raw amino-acid sequence, 316 residues long: 4-hydroxy-3-methylbut-2-enyl diphosphate reductase (316 aa).

Residue cysteine 12 coordinates [4Fe-4S] cluster. The (2E)-4-hydroxy-3-methylbut-2-enyl diphosphate site is built by histidine 41 and histidine 74. Positions 41 and 74 each coordinate dimethylallyl diphosphate. Positions 41 and 74 each coordinate isopentenyl diphosphate. Cysteine 96 provides a ligand contact to [4Fe-4S] cluster. Histidine 124 contacts (2E)-4-hydroxy-3-methylbut-2-enyl diphosphate. Histidine 124 contacts dimethylallyl diphosphate. Histidine 124 serves as a coordination point for isopentenyl diphosphate. Glutamate 126 functions as the Proton donor in the catalytic mechanism. Position 167 (threonine 167) interacts with (2E)-4-hydroxy-3-methylbut-2-enyl diphosphate. Cysteine 197 is a binding site for [4Fe-4S] cluster. Residues serine 225, serine 226, asparagine 227, and serine 269 each coordinate (2E)-4-hydroxy-3-methylbut-2-enyl diphosphate. 4 residues coordinate dimethylallyl diphosphate: serine 225, serine 226, asparagine 227, and serine 269. Isopentenyl diphosphate-binding residues include serine 225, serine 226, asparagine 227, and serine 269.

The protein belongs to the IspH family. In terms of assembly, homodimer. The cofactor is [4Fe-4S] cluster.

The enzyme catalyses isopentenyl diphosphate + 2 oxidized [2Fe-2S]-[ferredoxin] + H2O = (2E)-4-hydroxy-3-methylbut-2-enyl diphosphate + 2 reduced [2Fe-2S]-[ferredoxin] + 2 H(+). The catalysed reaction is dimethylallyl diphosphate + 2 oxidized [2Fe-2S]-[ferredoxin] + H2O = (2E)-4-hydroxy-3-methylbut-2-enyl diphosphate + 2 reduced [2Fe-2S]-[ferredoxin] + 2 H(+). Its pathway is isoprenoid biosynthesis; dimethylallyl diphosphate biosynthesis; dimethylallyl diphosphate from (2E)-4-hydroxy-3-methylbutenyl diphosphate: step 1/1. It functions in the pathway isoprenoid biosynthesis; isopentenyl diphosphate biosynthesis via DXP pathway; isopentenyl diphosphate from 1-deoxy-D-xylulose 5-phosphate: step 6/6. Functionally, catalyzes the conversion of 1-hydroxy-2-methyl-2-(E)-butenyl 4-diphosphate (HMBPP) into a mixture of isopentenyl diphosphate (IPP) and dimethylallyl diphosphate (DMAPP). Acts in the terminal step of the DOXP/MEP pathway for isoprenoid precursor biosynthesis. The sequence is that of 4-hydroxy-3-methylbut-2-enyl diphosphate reductase from Escherichia coli (strain UTI89 / UPEC).